A 216-amino-acid chain; its full sequence is MQAYNTQTGIVCPLDRSNVDTDQIIPKQFLKSIKRTGFGVNLFDDWRYLDEGFPGQDNSKRPINPDFVLNKPRYQGATILLARDNFGCGSSREHAPWALSEYGFRTVIAPSFADIFYNNCFKNGMLPIVLTEAQVDDLFEQCLANEGYELTADLERQVVVTPDGTEYPFEVDEFRKHCLLNGLDDIGLTLQQSEAIKAYEAKMQQNTPWIFKEVRA.

It belongs to the LeuD family. LeuD type 1 subfamily. As to quaternary structure, heterodimer of LeuC and LeuD.

The enzyme catalyses (2R,3S)-3-isopropylmalate = (2S)-2-isopropylmalate. It participates in amino-acid biosynthesis; L-leucine biosynthesis; L-leucine from 3-methyl-2-oxobutanoate: step 2/4. Its function is as follows. Catalyzes the isomerization between 2-isopropylmalate and 3-isopropylmalate, via the formation of 2-isopropylmaleate. This Psychrobacter sp. (strain PRwf-1) protein is 3-isopropylmalate dehydratase small subunit.